Reading from the N-terminus, the 124-residue chain is Acidic phospholipase A2 BA2 (124 aa).

7 disulfides stabilise this stretch: C26–C116, C28–C44, C43–C95, C49–C124, C50–C88, C57–C81, and C75–C86. Ca(2+)-binding residues include Y27, G29, and G31. H47 is an active-site residue. D48 provides a ligand contact to Ca(2+). D89 is an active-site residue.

It belongs to the phospholipase A2 family. Group II subfamily. D49 sub-subfamily. The cofactor is Ca(2+). Expressed by the venom gland.

It is found in the secreted. The catalysed reaction is a 1,2-diacyl-sn-glycero-3-phosphocholine + H2O = a 1-acyl-sn-glycero-3-phosphocholine + a fatty acid + H(+). Its function is as follows. PLA2 catalyzes the calcium-dependent hydrolysis of the 2-acyl groups in 3-sn-phosphoglycerides. In Gloydius halys (Chinese water mocassin), this protein is Acidic phospholipase A2 BA2.